A 317-amino-acid chain; its full sequence is Cell division protein FtsX (317 aa).

Topologically, residues 1–39 (MAIVRHKQPPLRRFMMYWVDHARQAFSSLGELWRNPLAS) are cytoplasmic. The chain crosses the membrane as a helical span at residues 40-60 (LMTLAVLGVSLALPSCFHVLL). The Periplasmic segment spans residues 61–188 (KNAEVVEGSW…LQGIMNLLRH (128 aa)). Residues 189 to 209 (TITGIAVLLLSAVLLIVGNTL) traverse the membrane as a helical segment. Over 210–241 (RLNILNQRSEIEVLKLVGATDAFIHRPFLYTG) the chain is Cytoplasmic. A helical membrane pass occupies residues 242 to 262 (IWFGVIGGMLAWWLTEVMVIW). Over 263 to 280 (SEGVVNELAGLYNSNFRL) the chain is Periplasmic. Residues 281 to 301 (VGMGAVDGINLILLGALLGLI) form a helical membrane-spanning segment. Residues 302–317 (ASWFSVHRHIRDIEPS) lie on the Cytoplasmic side of the membrane.

Belongs to the ABC-4 integral membrane protein family. FtsX subfamily. In terms of assembly, forms a membrane-associated complex with FtsE.

Its subcellular location is the cell inner membrane. Part of the ABC transporter FtsEX involved in cellular division. Encoded in an operon consisting of genes ftsY, ftsE and ftsX. This is Cell division protein FtsX from Aeromonas hydrophila.